Here is a 96-residue protein sequence, read N- to C-terminus: MSAVSKTVDGLVLRLYIQPKASRDSIIGLHGDELKVAITAPPVDGQANAHLVKYLAKQFRVAKSQVVIEKGELGRHKQVKIIEPQQIPTEVAAVTD.

It belongs to the UPF0235 family.

This Cronobacter sakazakii (strain ATCC BAA-894) (Enterobacter sakazakii) protein is UPF0235 protein ESA_00387.